A 677-amino-acid chain; its full sequence is Methionine--tRNA ligase (677 aa).

Positions 15–25 (PYANGSIHLGH) match the 'HIGH' region motif. Zn(2+) contacts are provided by C146, C149, C159, and C162. The 'KMSKS' region signature appears at 333–337 (KMSKS). K336 is an ATP binding site. Residues 575–677 (DFAKVDLRVA…DGAKPGQQVK (103 aa)) form the tRNA-binding domain.

This sequence belongs to the class-I aminoacyl-tRNA synthetase family. MetG type 1 subfamily. Homodimer. Requires Zn(2+) as cofactor.

It localises to the cytoplasm. The catalysed reaction is tRNA(Met) + L-methionine + ATP = L-methionyl-tRNA(Met) + AMP + diphosphate. Its function is as follows. Is required not only for elongation of protein synthesis but also for the initiation of all mRNA translation through initiator tRNA(fMet) aminoacylation. This is Methionine--tRNA ligase from Citrobacter koseri (strain ATCC BAA-895 / CDC 4225-83 / SGSC4696).